Consider the following 204-residue polypeptide: Large ribosomal subunit protein uL3 (204 aa).

It belongs to the universal ribosomal protein uL3 family. In terms of assembly, part of the 50S ribosomal subunit. Forms a cluster with proteins L14 and L19.

Functionally, one of the primary rRNA binding proteins, it binds directly near the 3'-end of the 23S rRNA, where it nucleates assembly of the 50S subunit. In Azobacteroides pseudotrichonymphae genomovar. CFP2, this protein is Large ribosomal subunit protein uL3.